We begin with the raw amino-acid sequence, 88 residues long: Small ribosomal subunit protein bS20 (88 aa).

A disordered region spans residues 1-20; sequence MANTAQARKRARQAVVQNAH.

It belongs to the bacterial ribosomal protein bS20 family.

Binds directly to 16S ribosomal RNA. The polypeptide is Small ribosomal subunit protein bS20 (Ralstonia nicotianae (strain ATCC BAA-1114 / GMI1000) (Ralstonia solanacearum)).